A 157-amino-acid chain; its full sequence is UPF0251 protein CLM_1546 (157 aa).

It belongs to the UPF0251 family.

The chain is UPF0251 protein CLM_1546 from Clostridium botulinum (strain Kyoto / Type A2).